Reading from the N-terminus, the 343-residue chain is MNPMSWLIITTSIALSTTMITSTTHWLMTWACLEINTLSMVPLISKPNHPRATEAATKYYLIQTMASTSMLFAATTNALNTSNWETHLTTEPMATTIITLALMMKMAAAPFHSWLPSVSQGTTTLTTLTILTWQKIAPLTILLTTHNKTNITLILLSAMLSITMGGLGSLNQTQLRKLMAFSSIAHTGWIMATITMAPKISTLTFTIYIMTTIPTFLLINTTMSMTIKDLGTMWTNSPYTMTILSMTILSMGGLPPLSGFMPKWLILNNLISMNMITEATLMAMASLLSLYVYMRLTYMSSMTLSPHTTTMPLKWRTSNKKHPMGTSMLTMMTMLLLPLSPNM.

8 consecutive transmembrane segments (helical) span residues 1–21 (MNPMSWLIITTSIALSTTMIT), 59–81 (YYLIQTMASTSMLFAATTNALNT), 96–116 (TIITLALMMKMAAAPFHSWLP), 150–170 (NITLILLSAMLSITMGGLGSL), 178–198 (LMAFSSIAHTGWIMATITMAP), 200–220 (ISTLTFTIYIMTTIPTFLLIN), 241–261 (MTILSMTILSMGGLPPLSGFM), and 270–290 (LISMNMITEATLMAMASLLSL).

The protein belongs to the complex I subunit 2 family.

Its subcellular location is the mitochondrion inner membrane. It catalyses the reaction a ubiquinone + NADH + 5 H(+)(in) = a ubiquinol + NAD(+) + 4 H(+)(out). Functionally, core subunit of the mitochondrial membrane respiratory chain NADH dehydrogenase (Complex I) that is believed to belong to the minimal assembly required for catalysis. Complex I functions in the transfer of electrons from NADH to the respiratory chain. The immediate electron acceptor for the enzyme is believed to be ubiquinone. The protein is NADH-ubiquinone oxidoreductase chain 2 (MT-ND2) of Lycodon semicarinatus (Ryukyu odd-tooth snake).